The following is a 166-amino-acid chain: T-cell surface glycoprotein CD3 zeta chain (166 aa).

The signal sequence occupies residues 1-21 (MKWTALVIVAVLQTQFPVTAA). Topologically, residues 22 to 30 (QSFGLLDPK) are extracellular. The helical transmembrane segment at 31 to 51 (LCYLLDGILFIYGVIVTALFL) threads the bilayer. Over 52-166 (RAKFSRSADA…ALHMQALPPR (115 aa)) the chain is Cytoplasmic. Serine 58 is modified (phosphoserine). ITAM domains follow at residues 61-89 (APAYQHGQNPVYNELNVGRREEYAVLDRR), 100-128 (PQRKKNPHEVVYNELRKDKMAEAYSEIGM), and 133-161 (QRRRGKGHDGVYQGLSTATKDTYDALHMQ). Phosphotyrosine occurs at positions 64, 72, 83, 111, 123, 144, and 155. The tract at residues 126–156 (IGMKSDNQRRRGKGHDGVYQGLSTATKDTYD) is disordered.

Belongs to the CD3Z/FCER1G family. As to quaternary structure, the TCR-CD3 complex is composed of a CD3D/CD3E and a CD3G/CD3E heterodimers that preferentially associate with TCRalpha and TCRbeta, respectively, to form TCRalpha/CD3E/CD3G and TCRbeta/CD3G/CD3E trimers. In turn, the hexamer interacts with CD3Z homodimer to form the TCR-CD3 complex. Alternatively, TCRalpha and TCRbeta can be replaced by TCRgamma and TCRdelta. Interacts with SLA. Interacts with TRAT1. Interacts with DOCK2. Interacts with SLA2. Interacts with SHB. Interacts with ZAP70. Interacts (tyrosine phosphorylated) with SHC1 (via SH2 domain). Interacts with PTPRC. Interacts with CRK; this interaction regulates CD3Z phosphorylation. Interacts (on T cell side) with CD81, ICAM1 and CD9 at immunological synapses between antigen-presenting cells and T cells. Interacts with CD160. Interacts with LY6E. Interacts with LY6E. The signaling subunit of immunoglobulin gamma (IgG) Fc receptor complex. As a homodimer or a heterodimer with FCER1G, associates with the ligand binding subunit FCGR3A (via transmembrane domain); this interaction is a prerequisite for Fc receptor complex expression on the cell surface. Interacts with CD5. Phosphorylated on Tyr residues after T-cell receptor triggering by LCK in association with CD4/CD8.

It localises to the cell membrane. Part of the TCR-CD3 complex present on T-lymphocyte cell surface that plays an essential role in adaptive immune response. When antigen presenting cells (APCs) activate T-cell receptor (TCR), TCR-mediated signals are transmitted across the cell membrane by the CD3 chains CD3D, CD3E, CD3G and CD3Z. All CD3 chains contain immunoreceptor tyrosine-based activation motifs (ITAMs) in their cytoplasmic domain. Upon TCR engagement, these motifs become phosphorylated by Src family protein tyrosine kinases LCK and FYN, resulting in the activation of downstream signaling pathways. CD3Z ITAMs phosphorylation creates multiple docking sites for the protein kinase ZAP70 leading to ZAP70 phosphorylation and its conversion into a catalytically active enzyme. Plays an important role in intrathymic T-cell differentiation. Additionally, participates in the activity-dependent synapse formation of retinal ganglion cells (RGCs) in both the retina and dorsal lateral geniculate nucleus (dLGN). This chain is T-cell surface glycoprotein CD3 zeta chain (CD247), found in Ovis aries (Sheep).